The chain runs to 397 residues: Lysophospholipid transporter LplT (397 aa).

Residues 1–17 (MSESVHTNTSLWSKGMK) lie on the Periplasmic side of the membrane. The helical transmembrane segment at 18–38 (AVIVAQFLSAFGDNALLFATL) threads the bilayer. Residues 39–52 (ALLKAQFYPEWSQP) are Cytoplasmic-facing. Residues 53-73 (ILQMVFVGAYILFAPFVGQVA) form a helical membrane-spanning segment. Over 74–90 (DSFAKGRVMMFANGLKL) the chain is Periplasmic. The helical transmembrane segment at 91-111 (LGAASICFGINPFLGYTLVGV) threads the bilayer. At 112–144 (GAAAYSPAKYGILGELTTGSKLVKANGLMEAST) the chain is on the cytoplasmic side. The chain crosses the membrane as a helical span at residues 145 to 165 (IAAILLGSVAGGVLADWHVLV). A166 is a topological domain (periplasmic). Residues 167–187 (LAACALAYGGAVVANIYIPKL) form a helical membrane-spanning segment. Residues 188-226 (AAARPGQSWNLINMTRSFLNACTSLWCNGETRFSLVGTS) are Cytoplasmic-facing. The chain crosses the membrane as a helical span at residues 227 to 247 (LFWGAGVTLRFLLVLWVPVAL). The Periplasmic segment spans residues 248–256 (GITDNATPT). Residues 257–277 (YLNAMVAIGIVVGAGAAAKLV) form a helical membrane-spanning segment. Topologically, residues 278–280 (TLE) are cytoplasmic. Residues 281–301 (TVSRCMPAGILIGVVVLIFSL) traverse the membrane as a helical segment. Over 302-304 (QHE) the chain is Periplasmic. Residues 305-325 (LLPAYALLMLIGVLGGFFVVP) form a helical membrane-spanning segment. Over 326 to 343 (LNALLQERGKKSVGAGNA) the chain is Cytoplasmic. Residues 344–364 (IAVQNLGENSAMLLMLGIYSL) form a helical membrane-spanning segment. At 365-366 (AV) the chain is on the periplasmic side. A helical membrane pass occupies residues 367–387 (MVGIPVVPIGIGFGALFALAI). Topologically, residues 388 to 397 (TALWIWQRRH) are cytoplasmic.

This sequence belongs to the major facilitator superfamily. LplT (TC 2.A.1.42) family.

It localises to the cell inner membrane. In terms of biological role, catalyzes the facilitated diffusion of 2-acyl-glycero-3-phosphoethanolamine (2-acyl-GPE) into the cell. The polypeptide is Lysophospholipid transporter LplT (Shigella dysenteriae serotype 1 (strain Sd197)).